The sequence spans 86 residues: Large ribosomal subunit protein uL24c (86 aa).

Belongs to the universal ribosomal protein uL24 family. In terms of assembly, part of the 50S ribosomal subunit.

It is found in the plastid. The protein localises to the chloroplast. Functionally, one of two assembly initiator proteins, it binds directly to the 5'-end of the 23S rRNA, where it nucleates assembly of the 50S subunit. The polypeptide is Large ribosomal subunit protein uL24c (rpl24) (Heterosigma akashiwo (strain NIES-293 / 8280G21-1)).